Here is a 119-residue protein sequence, read N- to C-terminus: Large ribosomal subunit protein bL20 (119 aa).

The protein belongs to the bacterial ribosomal protein bL20 family.

Binds directly to 23S ribosomal RNA and is necessary for the in vitro assembly process of the 50S ribosomal subunit. It is not involved in the protein synthesizing functions of that subunit. The sequence is that of Large ribosomal subunit protein bL20 from Azoarcus sp. (strain BH72).